The sequence spans 143 residues: Ribonuclease P protein component 2 (143 aa).

It belongs to the eukaryotic/archaeal RNase P protein component 2 family. As to quaternary structure, consists of a catalytic RNA component and at least 4-5 protein subunits.

Its subcellular location is the cytoplasm. The catalysed reaction is Endonucleolytic cleavage of RNA, removing 5'-extranucleotides from tRNA precursor.. Functionally, part of ribonuclease P, a protein complex that generates mature tRNA molecules by cleaving their 5'-ends. This chain is Ribonuclease P protein component 2, found in Saccharolobus solfataricus (strain ATCC 35092 / DSM 1617 / JCM 11322 / P2) (Sulfolobus solfataricus).